A 622-amino-acid chain; its full sequence is Pyranose 2-oxidase (622 aa).

A signal peptide spans 1–28 (MSASSSDPFHSFAKTSFTSKAAKRATAH). The propeptide occupies 29 to 37 (SLPPLPGPG). His-167 is modified (tele-8alpha-FAD histidine). Substrate is bound by residues Gln-449 and His-451. His-546 acts as the Proton acceptor in catalysis. Residue Asn-591 is part of the active site.

It belongs to the GMC oxidoreductase family. In terms of assembly, homotetramer. FAD is required as a cofactor. Not glycosylated.

Its subcellular location is the periplasm. The catalysed reaction is D-glucose + O2 = 2-dehydro-D-glucose + H2O2. Catalyzes the oxidation of various aldopyranoses and disaccharides on carbon-2 to the corresponding 2-keto sugars concomitant with the reduction of O(2) to H(2)O(2). Plays an important role in lignin degradation of wood rot fungi by supplying the essential cosubstrate H(2)O(2) for the ligninolytic peroxidases, lignin peroxidase and manganese-dependent peroxidase. The preferred substrate is D-glucose which is converted to 2-dehydro-D-glucose, an intermediate of a secondary metabolic pathway leading to the antibiotic cortalcerone. Also acts on D-xylose, together with D-glucose the major sugars derived from wood, on L-sorbose, D-galactose and 1,5-anhydroglucitol, a diagnostic marker of diabetes mellitus. The chain is Pyranose 2-oxidase (p2ox) from Phlebiopsis gigantea (White-rot fungus).